A 199-amino-acid chain; its full sequence is Putative ATP-dependent Clp protease proteolytic subunit-like (199 aa).

It belongs to the peptidase S14 family. In terms of assembly, component of the chloroplastic Clp protease core complex.

The protein localises to the plastid. It is found in the cyanelle. In terms of biological role, has lost the two conserved residues (Ser and His) proposed to be part of the active site. Therefore it could be inactive. The protein is Putative ATP-dependent Clp protease proteolytic subunit-like (clpP-B) of Cyanophora paradoxa.